A 68-amino-acid chain; its full sequence is Purkinje cell protein 4-like protein 1 (68 aa).

The span at M1–A16 shows a compositional bias: polar residues. A disordered region spans residues M1–T45. Position 8 is a phosphothreonine (T8). Residues Q18 to E31 show a composition bias toward basic and acidic residues. Residues T45 to S68 form the IQ domain.

Belongs to the PCP4 family.

This Homo sapiens (Human) protein is Purkinje cell protein 4-like protein 1 (PCP4L1).